The chain runs to 160 residues: Cytochrome b6-f complex subunit 4 (160 aa).

3 helical membrane-spanning segments follow: residues 36–56 (LLYI…GLAV), 95–115 (LLGV…PFLE), and 131–151 (TVFL…TLPI).

This sequence belongs to the cytochrome b family. PetD subfamily. In terms of assembly, the 4 large subunits of the cytochrome b6-f complex are cytochrome b6, subunit IV (17 kDa polypeptide, petD), cytochrome f and the Rieske protein, while the 4 small subunits are petG, petL, petM and petN. The complex functions as a dimer.

The protein resides in the plastid. Its subcellular location is the chloroplast thylakoid membrane. In terms of biological role, component of the cytochrome b6-f complex, which mediates electron transfer between photosystem II (PSII) and photosystem I (PSI), cyclic electron flow around PSI, and state transitions. This Oryza nivara (Indian wild rice) protein is Cytochrome b6-f complex subunit 4.